The following is a 150-amino-acid chain: UPF0735 ACT domain-containing protein DSY2247 (150 aa).

The region spanning 74–149 (TFSLTLENTA…GVRKIEVIGQ (76 aa)) is the ACT domain.

This sequence belongs to the UPF0735 family.

The chain is UPF0735 ACT domain-containing protein DSY2247 from Desulfitobacterium hafniense (strain Y51).